The sequence spans 132 residues: Small ribosomal subunit protein uS8c (132 aa).

It belongs to the universal ribosomal protein uS8 family. In terms of assembly, part of the 30S ribosomal subunit.

Its subcellular location is the plastid. It is found in the chloroplast. Its function is as follows. One of the primary rRNA binding proteins, it binds directly to 16S rRNA central domain where it helps coordinate assembly of the platform of the 30S subunit. The sequence is that of Small ribosomal subunit protein uS8c (rps8) from Dioscorea elephantipes (Elephant's foot yam).